Here is a 165-residue protein sequence, read N- to C-terminus: uncharacterized protein (165 aa).

Residues 68-107 (LEGAPEWAAPHPEEQRRSPPACSQHTPPLPSTPTGPPPCS) are disordered. Residues 94-107 (PPLPSTPTGPPPCS) are compositionally biased toward pro residues.

This is an uncharacterized protein from Homo sapiens (Human).